We begin with the raw amino-acid sequence, 172 residues long: uncharacterized protein (172 aa).

One can recognise a Ferritin-like diiron domain in the interval 1–148 (MANSQKVIDV…TIHDFFENGN (148 aa)).

This is an uncharacterized protein from Ureaplasma urealyticum (Ureaplasma urealyticum biotype 2).